Reading from the N-terminus, the 312-residue chain is Metaxin-1 homolog (312 aa).

The chain crosses the membrane as a helical span at residues 282-302 (ILFTIGALVLSVAFAIHTGLI).

It belongs to the metaxin family. As to quaternary structure, associates with the mitochondrial contact site and cristae organizing system (MICOS) complex (also known as MINOS or MitOS complex).

It localises to the mitochondrion outer membrane. In terms of biological role, involved in transport of proteins into the mitochondrion. Essential for embryonic development. This Caenorhabditis briggsae protein is Metaxin-1 homolog.